A 265-amino-acid polypeptide reads, in one-letter code: Translation initiation factor 2 subunit alpha (265 aa).

Residues 12–82 (GELVIGTVKK…KMRVVEVSLK (71 aa)) form the S1 motif domain.

Belongs to the eIF-2-alpha family. As to quaternary structure, heterotrimer composed of an alpha, a beta and a gamma chain.

Its function is as follows. eIF-2 functions in the early steps of protein synthesis by forming a ternary complex with GTP and initiator tRNA. The polypeptide is Translation initiation factor 2 subunit alpha (Pyrobaculum aerophilum (strain ATCC 51768 / DSM 7523 / JCM 9630 / CIP 104966 / NBRC 100827 / IM2)).